Consider the following 1766-residue polypeptide: E3 ubiquitin-protein ligase listerin (1766 aa).

The span at 1–11 (MGGKNKQRTKG) shows a compositional bias: basic residues. The interval 1 to 20 (MGGKNKQRTKGNVRPSSSGR) is disordered. HEAT repeat units lie at residues 100-138 (KGVL…KVKK), 193-231 (VLQD…SLLA), 292-329 (AEAP…TIED), 335-372 (NARK…KVPP), and 512-549 (EKTL…DEDE). The disordered stretch occupies residues 529–567 (KTATKPNNRKSLKVKFSDEDESERNTENGKITEVRSNSD). Residues 551 to 566 (ERNTENGKITEVRSNS) show a composition bias toward basic and acidic residues. 6 HEAT repeats span residues 606–644 (EQHL…ESQE), 672–710 (KDMH…KWIV), 916–953 (QVLI…NRTE), 1184–1227 (HLLP…MIRY), 1314–1355 (GIHN…YISK), and 1406–1447 (SKLM…TQEL). The RING-type zinc-finger motif lies at 1715–1762 (CMICFSVIHGSNYSLPKKACRTCKKKFHSACLYKWFTSSNKSTCPLCR).

This sequence belongs to the LTN1 family. As to quaternary structure, component of the ribosome quality control complex (RQC), composed of at least the E3 ubiquitin ligase LTN1 and NEMF associated with the 60S ribosomal subunit. The complex probably also contains TCF25 as well as VCP/p97 and its ubiquitin-binding cofactors.

It localises to the cytoplasm. It is found in the cytosol. It carries out the reaction S-ubiquitinyl-[E2 ubiquitin-conjugating enzyme]-L-cysteine + [acceptor protein]-L-lysine = [E2 ubiquitin-conjugating enzyme]-L-cysteine + N(6)-ubiquitinyl-[acceptor protein]-L-lysine.. It functions in the pathway protein modification; protein ubiquitination. Functionally, E3 ubiquitin-protein ligase component of the ribosome quality control complex (RQC), a ribosome-associated complex that mediates ubiquitination and extraction of incompletely synthesized nascent chains for proteasomal degradation. Within the RQC complex, LTN1 is recruited to stalled 60S ribosomal subunits by NEMF and mediates ubiquitination of stalled nascent chains. Ubiquitination leads to VCP/p97 recruitment for extraction and degradation of the incomplete translation product. This Gallus gallus (Chicken) protein is E3 ubiquitin-protein ligase listerin (LTN1).